Here is a 255-residue protein sequence, read N- to C-terminus: Coenzyme F420:L-glutamate ligase (255 aa).

GTP contacts are provided by residues isoleucine 11 to isoleucine 14, serine 40 to threonine 41, and lysine 45. Residue aspartate 109 participates in a divalent metal cation binding. Asparagine 112 serves as a coordination point for GTP. A divalent metal cation contacts are provided by aspartate 150, threonine 151, and glutamate 208. Methionine 206–threonine 213 is a GTP binding site.

The protein belongs to the CofE family. In terms of assembly, homodimer. It depends on Mg(2+) as a cofactor. Mn(2+) serves as cofactor. Requires K(+) as cofactor.

It carries out the reaction oxidized coenzyme F420-0 + GTP + L-glutamate = oxidized coenzyme F420-1 + GDP + phosphate + H(+). The enzyme catalyses oxidized coenzyme F420-1 + GTP + L-glutamate = oxidized coenzyme F420-2 + GDP + phosphate + H(+). The protein operates within cofactor biosynthesis; coenzyme F420 biosynthesis. In terms of biological role, catalyzes the GTP-dependent successive addition of two or more gamma-linked L-glutamates to the L-lactyl phosphodiester of 7,8-didemethyl-8-hydroxy-5-deazariboflavin (F420-0) to form coenzyme F420-0-glutamyl-glutamate (F420-2) or polyglutamated F420 derivatives. This is Coenzyme F420:L-glutamate ligase from Methanosarcina barkeri (strain Fusaro / DSM 804).